A 242-amino-acid chain; its full sequence is Anamorsin homolog (242 aa).

Residues 1–140 (MMNFADTLVI…NVTAENPDFL (140 aa)) are N-terminal SAM-like domain. The interval 141 to 162 (SNEDDDEGNSSDGEAYQNAEDN) is linker. Residues Cys-205, Cys-208, Cys-216, and Cys-219 each coordinate [4Fe-4S] cluster. Short sequence motifs (cx2C motif) lie at residues 205–208 (CGNC) and 216–219 (CASC). Positions 205–219 (CGNCYLGDAFRCASC) are fe-S binding site B.

It belongs to the anamorsin family. In terms of assembly, monomer. [4Fe-4S] cluster serves as cofactor.

It localises to the cytoplasm. The protein localises to the mitochondrion intermembrane space. In terms of biological role, component of the cytosolic iron-sulfur (Fe-S) protein assembly (CIA) machinery. Required for the maturation of extramitochondrial Fe-S proteins. Part of an electron transfer chain functioning in an early step of cytosolic Fe-S biogenesis, facilitating the de novo assembly of a [4Fe-4S] cluster on the cytosolic Fe-S scaffold complex. Electrons are transferred from NADPH via a FAD- and FMN-containing diflavin oxidoreductase. Together with the diflavin oxidoreductase, also required for the assembly of the diferric tyrosyl radical cofactor of ribonucleotide reductase (RNR), probably by providing electrons for reduction during radical cofactor maturation in the catalytic small subunit. In Plasmodium knowlesi (strain H), this protein is Anamorsin homolog.